A 207-amino-acid polypeptide reads, in one-letter code: Large ribosomal subunit protein uL4 (207 aa).

The tract at residues 49–75 is disordered; the sequence is HAVKNRSAVSGGGRKPWKQKGTGRARA.

The protein belongs to the universal ribosomal protein uL4 family. As to quaternary structure, part of the 50S ribosomal subunit.

Its function is as follows. One of the primary rRNA binding proteins, this protein initially binds near the 5'-end of the 23S rRNA. It is important during the early stages of 50S assembly. It makes multiple contacts with different domains of the 23S rRNA in the assembled 50S subunit and ribosome. Forms part of the polypeptide exit tunnel. The protein is Large ribosomal subunit protein uL4 of Leuconostoc mesenteroides subsp. mesenteroides (strain ATCC 8293 / DSM 20343 / BCRC 11652 / CCM 1803 / JCM 6124 / NCDO 523 / NBRC 100496 / NCIMB 8023 / NCTC 12954 / NRRL B-1118 / 37Y).